Reading from the N-terminus, the 633-residue chain is Alpha-amylase (633 aa).

E123 serves as the catalytic Nucleophile. D214 serves as the catalytic Proton donor.

It belongs to the glycosyl hydrolase 57 family.

It carries out the reaction Endohydrolysis of (1-&gt;4)-alpha-D-glucosidic linkages in polysaccharides containing three or more (1-&gt;4)-alpha-linked D-glucose units.. The chain is Alpha-amylase (amyA) from Pyrococcus horikoshii (strain ATCC 700860 / DSM 12428 / JCM 9974 / NBRC 100139 / OT-3).